We begin with the raw amino-acid sequence, 185 residues long: N-alpha-acetyltransferase 30 (185 aa).

Residues 31-179 (IEYIPYQGES…DAVRLLLPLN (149 aa)) enclose the N-acetyltransferase domain.

Belongs to the acetyltransferase family. MAK3 subfamily.

In terms of biological role, probable catalytic component of a complex displaying alpha (N-terminal) acetyltransferase activity. In Dictyostelium discoideum (Social amoeba), this protein is N-alpha-acetyltransferase 30.